The following is a 212-amino-acid chain: Ras-related protein RABC1 (212 aa).

Residue G2 is modified to N-acetylglycine. Position 20 to 27 (20 to 27) interacts with GTP; the sequence is GDSGVGKS. The Effector region motif lies at 41-49; sequence LSPTIGVDF. Residues 67 to 71, 127 to 130, and 157 to 158 contribute to the GTP site; these read DTAGQ, NKVD, and SA. Residues 182–212 are disordered; sequence TAEGSSGGKKNIFKQNPAQTTSTSSSYCCSS. Positions 201–212 are enriched in low complexity; sequence TTSTSSSYCCSS. Residues C209 and C210 are each lipidated (S-geranylgeranyl cysteine).

This sequence belongs to the small GTPase superfamily. Rab family.

It is found in the cell membrane. Intracellular vesicle trafficking and protein transport. The sequence is that of Ras-related protein RABC1 (RABC1) from Arabidopsis thaliana (Mouse-ear cress).